We begin with the raw amino-acid sequence, 21 residues long: Dahlein-5.5 (21 aa).

In terms of tissue distribution, expressed by the skin dorsal glands.

The protein resides in the secreted. Functionally, has no antimicrobial activity. Strongly inhibits the formation of NO by neuronal nitric oxide synthase at micromolar concentrations. This chain is Dahlein-5.5, found in Ranoidea dahlii (Dahl's aquatic frog).